A 370-amino-acid chain; its full sequence is Subtilisin-like protease (370 aa).

Residues 1–17 (MIASIVFFIVLVDGVAT) form the signal peptide. Residues aspartate 13, histidine 35, and serine 190 each act as charge relay system in the active site. Residues 18-261 (GSPNALVTDF…FGEVSPSRLE (244 aa)) enclose the Peptidase S8 domain. In terms of domain architecture, P/Homo B spans 240-370 (RVTDRWTHRN…TTEGTCHGIR (131 aa)).

This sequence belongs to the peptidase S8 family.

The protein is Subtilisin-like protease (ORF47) of Ictalurid herpesvirus 1 (strain Auburn) (IcHV-1).